The following is a 701-amino-acid chain: E3 ubiquitin-protein ligase RNF19B (701 aa).

A disordered region spans residues 1–97 (MGSEKDSESP…PAEPLSTSQA (97 aa)). Positions 1 to 304 (MGSEKDSESP…VCGCEFCWLC (304 aa)) are required for ubiquitin ligase activity and for protection against staurosporin-induced cell death. Residues 57 to 72 (QQLHQQQQIQQQQLLQ) are compositionally biased toward low complexity. The segment at 103–323 (ELLECPLCLV…LSPSGCTFWG (221 aa)) is TRIAD supradomain. Zn(2+)-binding residues include Cys107, Cys110, Cys130, Cys133, Cys194, Cys199, Cys216, Cys221, Cys226, Cys229, His234, Cys239, Cys273, and Cys276. An RING-type 1 zinc finger spans residues 107 to 156 (CPLCLVRQPAEQLPELQGCSHRSCLCCLRQYLRIEITESRVQLSCPECAE). The segment at 174–239 (EKYEEFLLRR…KQAWHPNQTC (66 aa)) adopts an IBR-type zinc-finger fold. An RING-type 2; atypical zinc finger spans residues 273–304 (CPRCGAYIIKMNDGSCNHMTCAVCGCEFCWLC). The active site involves Cys288. Residues Cys293, Cys296, Cys301, Cys304, His312, and Cys319 each contribute to the Zn(2+) site. Helical transmembrane passes span 340–360 (LIGA…AMVI) and 396–416 (IITA…IMLA). 2 disordered regions span residues 472 to 495 (LEGA…PGGL) and 658 to 677 (AELT…HGAP).

Belongs to the RBR family. RNF19 subfamily. As to quaternary structure, interacts with UBE2L3, UBE2L6 and UCKL1.

It is found in the cytoplasmic granule membrane. It localises to the endoplasmic reticulum membrane. The enzyme catalyses [E2 ubiquitin-conjugating enzyme]-S-ubiquitinyl-L-cysteine + [acceptor protein]-L-lysine = [E2 ubiquitin-conjugating enzyme]-L-cysteine + [acceptor protein]-N(6)-ubiquitinyl-L-lysine.. The protein operates within protein modification; protein ubiquitination. Its function is as follows. E3 ubiquitin-protein ligase which accepts ubiquitin from E2 ubiquitin-conjugating enzymes UBE2L3 and UBE2L6 in the form of a thioester and then directly transfers the ubiquitin to targeted substrates, such as UCKL1. Involved in the cytolytic activity of natural killer cells and cytotoxic T-cells. Protects against staurosporin-induced cell death. The sequence is that of E3 ubiquitin-protein ligase RNF19B (rnf19b) from Danio rerio (Zebrafish).